We begin with the raw amino-acid sequence, 366 residues long: Growth hormone secretagogue receptor type 1 (366 aa).

Over 1 to 40 (MWNATLSEEPGYNLTLPDLGWDAPADNDSLTDELLPLFPA) the chain is Extracellular. N-linked (GlcNAc...) asparagine glycosylation is found at asparagine 3, asparagine 13, and asparagine 27. A helical membrane pass occupies residues 41–66 (PLLAGVTATCVALFVVGIAGNLLTML). The Cytoplasmic segment spans residues 67 to 72 (VVSRFR). The helical transmembrane segment at 73 to 96 (ELRTTTNLYLSSMAFSDLLIFLCM) threads the bilayer. Topologically, residues 97-117 (PLDLVRLWQYRPWNFGDLLCK) are extracellular. A disulfide bridge connects residues cysteine 116 and cysteine 198. A helical transmembrane segment spans residues 118-139 (LFQFVSESCTYATVLTITALSV). Over 140 to 162 (ERYFAICFPLRAKVVVTKGRVKL) the chain is Cytoplasmic. A helical transmembrane segment spans residues 163–183 (VILVIWAVAFCSAGPIFVLVG). The Extracellular segment spans residues 184-211 (VEHENGTDPRDTNECRATEFAVRSGLLT). A glycan (N-linked (GlcNAc...) asparagine) is linked at asparagine 188. Residues 212–235 (VMVWVSSVFFFLPVFCLTVLYSLI) traverse the membrane as a helical segment. The Cytoplasmic segment spans residues 236–263 (GRKLWRRKRGEAAVGASLRDQNHKQTVK). The chain crosses the membrane as a helical span at residues 264–285 (MLAVVVFAFILCWLPFHVGRYL). Topologically, residues 286 to 302 (FSKSFEPGSLEIAQISQ) are extracellular. The chain crosses the membrane as a helical span at residues 303–326 (YCNLVSFVLFYLSAAINPILYNIM). The Cytoplasmic segment spans residues 327 to 366 (SKKYRVAVFKLLGFEPFSQRKLSTLKDESSRAWTETSINT).

Belongs to the G-protein coupled receptor 1 family.

It localises to the cell membrane. Its function is as follows. Receptor for ghrelin, coupled to G-alpha-11 proteins. Stimulates growth hormone secretion. Also binds other growth hormone releasing peptides (GHRP) (e.g. Met-enkephalin and GHRP-6) as well as non-peptide, low molecular weight secretagogues (e.g. L-692,429, MK-0677, adenosine). The protein is Growth hormone secretagogue receptor type 1 (GHSR) of Mustela putorius furo (European domestic ferret).